A 466-amino-acid chain; its full sequence is FBD-associated F-box protein At5g22730 (466 aa).

One can recognise an F-box domain in the interval 27 to 80 (EDLISKLPDSLITQILLYLPIKDIVRTSSLSSRWKSLWLLIPRLDLDSEEFQDY). The region spanning 385–436 (DEPIIFSSVPRCLVSSLESVEIKKFNGRPAKMEVARYFLENSGVLQKLVLHL) is the FBD domain.

In Arabidopsis thaliana (Mouse-ear cress), this protein is FBD-associated F-box protein At5g22730.